The following is a 159-amino-acid chain: Phosphopantetheine adenylyltransferase (159 aa).

Substrate is bound at residue Thr10. ATP contacts are provided by residues 10–11 and His18; that span reads TF. Positions 42, 74, and 88 each coordinate substrate. ATP is bound by residues 89 to 91, Glu99, and 124 to 130; these read GLR and WSFISSS.

It belongs to the bacterial CoaD family. As to quaternary structure, homohexamer. The cofactor is Mg(2+).

The protein localises to the cytoplasm. The enzyme catalyses (R)-4'-phosphopantetheine + ATP + H(+) = 3'-dephospho-CoA + diphosphate. It participates in cofactor biosynthesis; coenzyme A biosynthesis; CoA from (R)-pantothenate: step 4/5. In terms of biological role, reversibly transfers an adenylyl group from ATP to 4'-phosphopantetheine, yielding dephospho-CoA (dPCoA) and pyrophosphate. This chain is Phosphopantetheine adenylyltransferase, found in Yersinia pseudotuberculosis serotype I (strain IP32953).